A 596-amino-acid polypeptide reads, in one-letter code: Zinc finger CCCH domain-containing protein 64 (596 aa).

Disordered stretches follow at residues 243–263 and 272–291; these read LSPTPTSTMSPAELSAKPPKT and DGAAESKKRPNDSDSDSQYW. 2 C3H1-type zinc fingers span residues 303–331 and 335–363; these read SQGEKLCFKFVCSGSCPRGEDCHFQHNAE and QCRRGVCLDLIIKGKCEKGPECSYKHEFQ.

This is Zinc finger CCCH domain-containing protein 64 from Arabidopsis thaliana (Mouse-ear cress).